The chain runs to 326 residues: Pantothenate kinase (326 aa).

An ATP-binding site is contributed by 104 to 111; it reads GSVAVGKS.

Belongs to the prokaryotic pantothenate kinase family.

Its subcellular location is the cytoplasm. The catalysed reaction is (R)-pantothenate + ATP = (R)-4'-phosphopantothenate + ADP + H(+). The protein operates within cofactor biosynthesis; coenzyme A biosynthesis; CoA from (R)-pantothenate: step 1/5. In Parvibaculum lavamentivorans (strain DS-1 / DSM 13023 / NCIMB 13966), this protein is Pantothenate kinase.